Reading from the N-terminus, the 430-residue chain is Adenylosuccinate synthetase (430 aa).

Residues 12–18 and 40–42 contribute to the GTP site; these read GDEGKGK and GHT. Asp13 (proton acceptor) is an active-site residue. Mg(2+) is bound by residues Asp13 and Gly40. IMP contacts are provided by residues 13-16, 38-41, Thr130, Arg144, Gln224, Thr239, and Arg303; these read DEGK and NAGH. His41 (proton donor) is an active-site residue. 299 to 305 is a substrate binding site; sequence TVTGRKR. Residues Arg305, 331 to 333, and 413 to 415 each bind GTP; these read KLD and STS.

Belongs to the adenylosuccinate synthetase family. Homodimer. Requires Mg(2+) as cofactor.

The protein localises to the cytoplasm. It carries out the reaction IMP + L-aspartate + GTP = N(6)-(1,2-dicarboxyethyl)-AMP + GDP + phosphate + 2 H(+). It participates in purine metabolism; AMP biosynthesis via de novo pathway; AMP from IMP: step 1/2. Functionally, plays an important role in the de novo pathway of purine nucleotide biosynthesis. Catalyzes the first committed step in the biosynthesis of AMP from IMP. The polypeptide is Adenylosuccinate synthetase (Methylorubrum extorquens (strain CM4 / NCIMB 13688) (Methylobacterium extorquens)).